A 460-amino-acid polypeptide reads, in one-letter code: Ribulose bisphosphate carboxylase (460 aa).

Asn112 serves as a coordination point for substrate. Lys167 (proton acceptor) is an active-site residue. Lys169 is a substrate binding site. Residues Lys192, Asp194, and Glu195 each contribute to the Mg(2+) site. Lys192 carries the N6-carboxylysine modification. The Proton acceptor role is filled by His288. Arg289, His322, and Ser369 together coordinate substrate.

The protein belongs to the RuBisCO large chain family. Type II subfamily. Homodimer. Requires Mg(2+) as cofactor.

The catalysed reaction is 2 (2R)-3-phosphoglycerate + 2 H(+) = D-ribulose 1,5-bisphosphate + CO2 + H2O. It carries out the reaction D-ribulose 1,5-bisphosphate + O2 = 2-phosphoglycolate + (2R)-3-phosphoglycerate + 2 H(+). RuBisCO catalyzes two reactions: the carboxylation of D-ribulose 1,5-bisphosphate, the primary event in carbon dioxide fixation, as well as the oxidative fragmentation of the pentose substrate. Both reactions occur simultaneously and in competition at the same active site. The sequence is that of Ribulose bisphosphate carboxylase from Rhodopseudomonas palustris (strain BisA53).